A 547-amino-acid polypeptide reads, in one-letter code: CTP synthase (547 aa).

The tract at residues 1 to 267 (MTKFVFVTGG…AQQTLALLNL (267 aa)) is amidoligase domain. Residue Ser-13 coordinates CTP. Ser-13 contacts UTP. ATP is bound by residues 14 to 19 (SIGKGI) and Asp-71. Residues Asp-71 and Glu-141 each contribute to the Mg(2+) site. Residues 148-150 (DIE), 188-193 (KTKPTQ), and Lys-224 each bind CTP. Residues 188–193 (KTKPTQ) and Lys-224 contribute to the UTP site. Positions 292-534 (EIALVGKYVQ…VKAAVDHYST (243 aa)) constitute a Glutamine amidotransferase type-1 domain. Gly-354 provides a ligand contact to L-glutamine. Residue Cys-381 is the Nucleophile; for glutamine hydrolysis of the active site. L-glutamine is bound by residues 382-385 (LGMQ), Glu-405, and Arg-462. Catalysis depends on residues His-507 and Glu-509.

This sequence belongs to the CTP synthase family. As to quaternary structure, homotetramer.

The catalysed reaction is UTP + L-glutamine + ATP + H2O = CTP + L-glutamate + ADP + phosphate + 2 H(+). It carries out the reaction L-glutamine + H2O = L-glutamate + NH4(+). The enzyme catalyses UTP + NH4(+) + ATP = CTP + ADP + phosphate + 2 H(+). It participates in pyrimidine metabolism; CTP biosynthesis via de novo pathway; CTP from UDP: step 2/2. Allosterically activated by GTP, when glutamine is the substrate; GTP has no effect on the reaction when ammonia is the substrate. The allosteric effector GTP functions by stabilizing the protein conformation that binds the tetrahedral intermediate(s) formed during glutamine hydrolysis. Inhibited by the product CTP, via allosteric rather than competitive inhibition. In terms of biological role, catalyzes the ATP-dependent amination of UTP to CTP with either L-glutamine or ammonia as the source of nitrogen. Regulates intracellular CTP levels through interactions with the four ribonucleotide triphosphates. The protein is CTP synthase of Rippkaea orientalis (strain PCC 8801 / RF-1) (Cyanothece sp. (strain PCC 8801)).